We begin with the raw amino-acid sequence, 98 residues long: NADH-ubiquinone oxidoreductase chain 4L (98 aa).

3 helical membrane passes run 1–21, 29–49, and 61–81; these read MTPTYMNIMLAFTISLLGMLT, SLLCLEGMMMSLFIMTTLIAL, and IILLVFAACEAAVGLALLVSI.

It belongs to the complex I subunit 4L family. In terms of assembly, core subunit of respiratory chain NADH dehydrogenase (Complex I) which is composed of 45 different subunits.

It is found in the mitochondrion inner membrane. It catalyses the reaction a ubiquinone + NADH + 5 H(+)(in) = a ubiquinol + NAD(+) + 4 H(+)(out). Core subunit of the mitochondrial membrane respiratory chain NADH dehydrogenase (Complex I) which catalyzes electron transfer from NADH through the respiratory chain, using ubiquinone as an electron acceptor. Part of the enzyme membrane arm which is embedded in the lipid bilayer and involved in proton translocation. The sequence is that of NADH-ubiquinone oxidoreductase chain 4L (MT-ND4L) from Macaca pagensis (Mentawai macaque).